A 531-amino-acid chain; its full sequence is Histone-arginine methyltransferase CARMER (531 aa).

The SAM-dependent MTase PRMT-type domain maps to Ala-141 to His-450. S-adenosyl-L-methionine contacts are provided by Gln-154, Arg-163, Gly-187, Glu-209, Glu-238, and Thr-266. Arg-501 is modified (asymmetric dimethylarginine; by autocatalysis).

This sequence belongs to the class I-like SAM-binding methyltransferase superfamily. Protein arginine N-methyltransferase family. Homodimer. Post-translationally, the dimethylated protein is the major form.

The protein resides in the cytoplasm. It localises to the nucleus. It catalyses the reaction L-arginyl-[protein] + 2 S-adenosyl-L-methionine = N(omega),N(omega)-dimethyl-L-arginyl-[protein] + 2 S-adenosyl-L-homocysteine + 2 H(+). Methylates (mono- and asymmetric dimethylation) the guanidino nitrogens of arginyl residues in proteins. May methylate histone H3 at 'Arg-17' and activate transcription via chromatin remodeling. This chain is Histone-arginine methyltransferase CARMER (Art4), found in Drosophila persimilis (Fruit fly).